Reading from the N-terminus, the 227-residue chain is Orotidine 5'-phosphate decarboxylase (227 aa).

Residues Asp8, Lys30, 57 to 66 (DLKFHDIPNT), Thr116, Arg177, Gln186, Gly206, and Arg207 each bind substrate. Lys59 acts as the Proton donor in catalysis.

It belongs to the OMP decarboxylase family. Type 1 subfamily. In terms of assembly, homodimer.

It catalyses the reaction orotidine 5'-phosphate + H(+) = UMP + CO2. It functions in the pathway pyrimidine metabolism; UMP biosynthesis via de novo pathway; UMP from orotate: step 2/2. In terms of biological role, catalyzes the decarboxylation of orotidine 5'-monophosphate (OMP) to uridine 5'-monophosphate (UMP). This chain is Orotidine 5'-phosphate decarboxylase, found in Acinetobacter baylyi (strain ATCC 33305 / BD413 / ADP1).